Consider the following 472-residue polypeptide: Radical SAM cyclopropyl synthase TigE (472 aa).

In terms of domain architecture, Radical SAM core spans 106 to 331; the sequence is GEQIKAIQLV…VIDLYEYGLD (226 aa). [4Fe-4S] cluster contacts are provided by cysteine 120, cysteine 124, cysteine 127, tyrosine 339, cysteine 360, cysteine 378, cysteine 414, cysteine 417, cysteine 423, cysteine 427, and cysteine 446.

The protein belongs to the radical SAM superfamily. Requires [4Fe-4S] cluster as cofactor.

The catalysed reaction is L-isoleucyl-[protein] + AH2 + 2 S-adenosyl-L-methionine = methylcyclopropylglycine-[protein] + 2 5'-deoxyadenosine + 2 L-methionine + A + 2 H(+). Functionally, radical S-adenosylmethionine (SAM) enzyme that catalyzes the formation of methylcyclopropylglycine (mCPG) residues from isoleucine residues residing in the repeating TIGSVS motif of the precursor peptide TigB. Is thus involved in the maturation of a ribosomally synthesized and post-translationally modified peptide (RiPP). This is Radical SAM cyclopropyl synthase TigE from Paramaledivibacter caminithermalis (strain DSM 15212 / CIP 107654 / DViRD3) (Clostridium caminithermale).